The primary structure comprises 341 residues: Binder of USO1 and GRH1 protein 1 (341 aa).

Positions 1 to 181 are disordered; sequence MSEQESDEVK…AADDLFANDG (181 aa). Serine 2 carries the post-translational modification N-acetylserine. Positions 2-41 form a coiled coil; the sequence is SEQESDEVKRMKQLEEARKRVEELKKKKNKKNKGKKNKNS. Basic and acidic residues predominate over residues 7–26; it reads DEVKRMKQLEEARKRVEELK. A compositionally biased stretch (basic residues) spans 27-39; sequence KKKNKKNKGKKNK. Over residues 69–78 the composition is skewed to polar residues; that stretch reads KANSTKSENN. Residues 79–91 show a composition bias toward acidic residues; the sequence is DQNDVDEESEEKE. At serine 87 the chain carries Phosphoserine. Positions 118-132 are enriched in basic and acidic residues; it reads GKDDAENTKKEEVQE. A compositionally biased stretch (polar residues) spans 158-171; it reads VQTQEGNEPSNTSE. Position 170 is a phosphoserine (serine 170). Positions 188 to 272 form a coiled coil; the sequence is LTTIKKQKEE…LKLAEAKAAR (85 aa). At threonine 292 the chain carries Phosphothreonine.

In terms of assembly, interacts with GRH1 (via C-terminus), probably forming a heterooligomer consisting of a GRH1 dimer and a BUG1 dimer.

It is found in the cytoplasm. Its subcellular location is the golgi apparatus. The protein localises to the cis-Golgi network membrane. Functionally, involved in ER to Golgi vesicle-mediated transport by either facilitating USO1-dependent and -independent tethering or increasing target accuracy of fusion events of COPII-coated vesicles. The sequence is that of Binder of USO1 and GRH1 protein 1 from Saccharomyces cerevisiae (strain ATCC 204508 / S288c) (Baker's yeast).